We begin with the raw amino-acid sequence, 247 residues long: tRNA pseudouridine synthase A (247 aa).

The active-site Nucleophile is aspartate 52. Tyrosine 113 contributes to the substrate binding site.

This sequence belongs to the tRNA pseudouridine synthase TruA family. As to quaternary structure, homodimer.

The enzyme catalyses uridine(38/39/40) in tRNA = pseudouridine(38/39/40) in tRNA. Functionally, formation of pseudouridine at positions 38, 39 and 40 in the anticodon stem and loop of transfer RNAs. This Bartonella henselae (strain ATCC 49882 / DSM 28221 / CCUG 30454 / Houston 1) (Rochalimaea henselae) protein is tRNA pseudouridine synthase A.